The chain runs to 671 residues: E3 ubiquitin-protein ligase pub2 (671 aa).

The region spanning 1–112 (MENIRFEVQL…KDDYKTRITL (112 aa)) is the C2 domain. In terms of domain architecture, WW spans 242 to 275 (GPLPAGWEMRLSEDYHVYFVDHSTKTTTWSDPRD). The 334-residue stretch at 338–671 (SVSDMKKKLL…IQETAGFGTE (334 aa)) folds into the HECT domain. C639 (glycyl thioester intermediate) is an active-site residue.

Interacts with the E2 ubiquitin-conjugating enzyme ubc4.

It localises to the membrane. It is found in the cytoplasm. It carries out the reaction S-ubiquitinyl-[E2 ubiquitin-conjugating enzyme]-L-cysteine + [acceptor protein]-L-lysine = [E2 ubiquitin-conjugating enzyme]-L-cysteine + N(6)-ubiquitinyl-[acceptor protein]-L-lysine.. Its pathway is protein modification; protein ubiquitination. Functionally, E3 ubiquitin-protein ligase which accepts ubiquitin from an E2 ubiquitin-conjugating enzyme in the form of a thioester and then directly transfers the ubiquitin to targeted substrates. This Schizosaccharomyces pombe (strain 972 / ATCC 24843) (Fission yeast) protein is E3 ubiquitin-protein ligase pub2 (pub2).